A 138-amino-acid polypeptide reads, in one-letter code: MLIPRKVKHRKQHHPRQRGIASGGTKVNFGDYGIQALEHAYVTNRQIESARIAINRHIKRGGKVWINIFPDRPLTKKPAETRMGSGKGSPEWWVVNVKPGRVLFELSYPNEQTARAALTRAIHKLPIKARIVTREEQF.

Over residues 1–17 the composition is skewed to basic residues; sequence MLIPRKVKHRKQHHPRQ. A disordered region spans residues 1–22; it reads MLIPRKVKHRKQHHPRQRGIAS.

It belongs to the universal ribosomal protein uL16 family. As to quaternary structure, part of the 50S ribosomal subunit.

Its function is as follows. Binds 23S rRNA and is also seen to make contacts with the A and possibly P site tRNAs. This is Large ribosomal subunit protein uL16 from Mycobacterium leprae (strain Br4923).